Here is a 452-residue protein sequence, read N- to C-terminus: Bifunctional protein GlmU (452 aa).

A pyrophosphorylase region spans residues Met1–Arg226. UDP-N-acetyl-alpha-D-glucosamine is bound by residues Leu8–Gly11, Lys22, Gln73, Gly78–Thr79, Tyr99–Asp101, Gly136, Glu151, Asn166, and Asn224. Mg(2+) is bound at residue Asp101. Mg(2+) is bound at residue Asn224. The linker stretch occupies residues Val227 to Asp247. The N-acetyltransferase stretch occupies residues Gly248–Gly452. The UDP-N-acetyl-alpha-D-glucosamine site is built by Arg330 and Lys348. His360 functions as the Proton acceptor in the catalytic mechanism. Residues Tyr363 and Asn374 each contribute to the UDP-N-acetyl-alpha-D-glucosamine site. Residues Ala377, Asn383–Tyr384, Ser402, Ala420, and Arg437 contribute to the acetyl-CoA site.

The protein in the N-terminal section; belongs to the N-acetylglucosamine-1-phosphate uridyltransferase family. In the C-terminal section; belongs to the transferase hexapeptide repeat family. In terms of assembly, homotrimer. Requires Mg(2+) as cofactor.

Its subcellular location is the cytoplasm. The catalysed reaction is alpha-D-glucosamine 1-phosphate + acetyl-CoA = N-acetyl-alpha-D-glucosamine 1-phosphate + CoA + H(+). It carries out the reaction N-acetyl-alpha-D-glucosamine 1-phosphate + UTP + H(+) = UDP-N-acetyl-alpha-D-glucosamine + diphosphate. The protein operates within nucleotide-sugar biosynthesis; UDP-N-acetyl-alpha-D-glucosamine biosynthesis; N-acetyl-alpha-D-glucosamine 1-phosphate from alpha-D-glucosamine 6-phosphate (route II): step 2/2. It functions in the pathway nucleotide-sugar biosynthesis; UDP-N-acetyl-alpha-D-glucosamine biosynthesis; UDP-N-acetyl-alpha-D-glucosamine from N-acetyl-alpha-D-glucosamine 1-phosphate: step 1/1. It participates in bacterial outer membrane biogenesis; LPS lipid A biosynthesis. Catalyzes the last two sequential reactions in the de novo biosynthetic pathway for UDP-N-acetylglucosamine (UDP-GlcNAc). The C-terminal domain catalyzes the transfer of acetyl group from acetyl coenzyme A to glucosamine-1-phosphate (GlcN-1-P) to produce N-acetylglucosamine-1-phosphate (GlcNAc-1-P), which is converted into UDP-GlcNAc by the transfer of uridine 5-monophosphate (from uridine 5-triphosphate), a reaction catalyzed by the N-terminal domain. The protein is Bifunctional protein GlmU of Alcanivorax borkumensis (strain ATCC 700651 / DSM 11573 / NCIMB 13689 / SK2).